Consider the following 51-residue polypeptide: uncharacterized protein (51 aa).

The interval 1–24 (MGGRFSGRVGIEKGGHPPSAADHS) is disordered.

This is an uncharacterized protein from Escherichia coli.